Here is a 427-residue protein sequence, read N- to C-terminus: Gamma-glutamyl phosphate reductase (427 aa).

It belongs to the gamma-glutamyl phosphate reductase family.

Its subcellular location is the cytoplasm. The catalysed reaction is L-glutamate 5-semialdehyde + phosphate + NADP(+) = L-glutamyl 5-phosphate + NADPH + H(+). Its pathway is amino-acid biosynthesis; L-proline biosynthesis; L-glutamate 5-semialdehyde from L-glutamate: step 2/2. Functionally, catalyzes the NADPH-dependent reduction of L-glutamate 5-phosphate into L-glutamate 5-semialdehyde and phosphate. The product spontaneously undergoes cyclization to form 1-pyrroline-5-carboxylate. The polypeptide is Gamma-glutamyl phosphate reductase (Sinorhizobium medicae (strain WSM419) (Ensifer medicae)).